Here is a 184-residue protein sequence, read N- to C-terminus: Glutathione-regulated potassium-efflux system ancillary protein KefG (184 aa).

It belongs to the NAD(P)H dehydrogenase (quinone) family. KefG subfamily. As to quaternary structure, interacts with KefB.

The protein localises to the cell inner membrane. It catalyses the reaction a quinone + NADH + H(+) = a quinol + NAD(+). The catalysed reaction is a quinone + NADPH + H(+) = a quinol + NADP(+). Functionally, regulatory subunit of a potassium efflux system that confers protection against electrophiles. Required for full activity of KefB. The chain is Glutathione-regulated potassium-efflux system ancillary protein KefG from Escherichia coli O8 (strain IAI1).